We begin with the raw amino-acid sequence, 309 residues long: Glutaminase (309 aa).

Residues S65, N117, E162, N169, Y193, Y245, and V263 each contribute to the substrate site.

The protein belongs to the glutaminase family. As to quaternary structure, homotetramer.

It carries out the reaction L-glutamine + H2O = L-glutamate + NH4(+). The protein is Glutaminase of Geobacillus thermodenitrificans (strain NG80-2).